A 214-amino-acid chain; its full sequence is C-type lectin domain family 4 member E (214 aa).

The Cytoplasmic portion of the chain corresponds to 1–22 (MNSTKSPASHHTERGCFKNSQV). Residues 23-45 (LSWTIAGASILFLSGCFITRCVV) traverse the membrane as a helical; Signal-anchor for type II membrane protein segment. The Extracellular portion of the chain corresponds to 46–214 (TYRSSQISGQ…CEMPEISPLD (169 aa)). C80 and C91 are joined by a disulfide. One can recognise a C-type lectin domain in the interval 87 to 206 (YQSSCYFFST…CFYSMPWICE (120 aa)). N-linked (GlcNAc...) asparagine glycosylation is present at N107. 2 cysteine pairs are disulfide-bonded: C108–C205 and C179–C197. Ca(2+) contacts are provided by V117, E123, E169, N171, N193, D194, and E206. Positions 169–171 (EPN) match the Confers specificity for glucose/mannose-type carbohydrates motif.

As to quaternary structure, monomer and homodimer. Interacts with signaling adapter Fc receptor gamma chain/FCER1G to form a functional complex; the interaction is direct. Alternatively, acts as a bridge for interaction between CLEC4D and FCER1G. A heterodimer of CLEC4E and CLEC4D associates with FCER1G to form a functional complex. Interacts with SAP130 nuclear protein that is released from necrotic cells; the interaction is direct. In terms of tissue distribution, highly expressed in macrophages in response to stimulation with bacterial glycolipids and pro-inflammatory cytokines. Expressed in dendritic cells (at protein level) in response to stimulation with mycobacterial trehalose 6,6'-dimycolate (TDM).

The protein localises to the cell membrane. Its subcellular location is the cell projection. It localises to the phagocytic cup. Functionally, calcium-dependent lectin that acts as a pattern recognition receptor (PRR) of the innate immune system: recognizes damage-associated molecular patterns (DAMPs) of abnormal self and pathogen-associated molecular patterns (PAMPs) of bacteria and fungi. The PAMPs notably include mycobacterial trehalose 6,6'-dimycolate (TDM), a cell wall glycolipid with potent adjuvant immunomodulatory functions. Interacts with signaling adapter Fc receptor gamma chain/FCER1G to form a functional complex in myeloid cells. Binding of mycobacterial trehalose 6,6'-dimycolate (TDM) to this receptor complex leads to phosphorylation of the immunoreceptor tyrosine-based activation motif (ITAM) of FCER1G, triggering activation of SYK, CARD9 and NF-kappa-B, consequently driving maturation of antigen-presenting cells and shaping antigen-specific priming of T-cells toward effector T-helper 1 (Th1) and T-helper 17 (Th17) cell subtypes. Also recognizes alpha-mannose residues on pathogenic fungi of the genus Malassezia and mediates macrophage activation. Through recognition of DAMPs released upon nonhomeostatic cell death, enables immune sensing of damaged self and promotes inflammatory cell infiltration into the damaged tissue. The sequence is that of C-type lectin domain family 4 member E from Mus musculus (Mouse).